We begin with the raw amino-acid sequence, 153 residues long: Gamma-glutamylaminecyclotransferase (153 aa).

Residue 7–10 (YGTL) coordinates substrate. The active-site Proton acceptor is the Glu82. The interval 130 to 153 (QLPHHDSYDSEGPHGLRYNPRENR) is disordered. Residues 132–153 (PHHDSYDSEGPHGLRYNPRENR) show a composition bias toward basic and acidic residues.

Belongs to the gamma-glutamylcyclotransferase family. In terms of assembly, monomer.

The catalysed reaction is epsilon-(gamma-L-glutamyl)-L-lysine = 5-oxo-L-proline + L-lysine. In terms of biological role, contributes to degradation of proteins cross-linked by transglutaminases by degrading the cross-link between a lysine and a glutamic acid residue. Catalyzes the formation of 5-oxo-L-proline from L-gamma-glutamyl-L-epsilon-lysine. Inactive with L-gamma-glutamyl-alpha-amino acid substrates such as L-gamma-glutamyl-L-alpha-cysteine and L-gamma-glutamyl-L-alpha-alanine. The chain is Gamma-glutamylaminecyclotransferase (GGACT) from Homo sapiens (Human).